The primary structure comprises 240 residues: EF-hand domain-containing protein D1 (240 aa).

Residues 17–54 (EVRAETDQGDPQPAPCDAPAGHPEPEPPARAPTASADS) are disordered. 2 EF-hand domains span residues 91-126 (RLLK…LGAP) and 127-162 (QTHL…AAAG). Ca(2+) contacts are provided by aspartate 104, aspartate 108, glutamate 115, aspartate 140, aspartate 142, aspartate 144, lysine 146, and glutamate 151.

In terms of tissue distribution, widely expressed. Highest expression in testis, followed by ovary, kidney, cerebrum, cerebellum, heart, liver, and spleen. In the cerebrum and cerebellum, undetectable at embryonic stages, expression increases after birth up to adult stage. In adult CNS, detected in neurons of the cerebellum, cerebrum and hippocampus formation, including dentate gyrus and Cornu Ammonis, but not in the white matter. In the testis, expressed in spermatocytes, but not in spermatogonia nor in interstitial cells. In ovary, found predominantly in mural granulosa cells and those of the cumulus oophorus. In kidney, expressed in collecting ducts, but not in glomeruli. Not detected in skeletal muscle.

Its subcellular location is the mitochondrion inner membrane. Acts as a calcium sensor for mitochondrial flash (mitoflash) activation, an event characterized by stochastic bursts of superoxide production. May play a role in neuronal differentiation. In Mus musculus (Mouse), this protein is EF-hand domain-containing protein D1 (Efhd1).